The following is a 617-amino-acid chain: Secretogranin-2 (617 aa).

The N-terminal stretch at 1–30 (MAGAKAYRLGAVLLLIHLIFLISGAEAASF) is a signal peptide. Tyr-153 carries the sulfotyrosine modification. Phosphoserine occurs at positions 176 and 270. 2 stretches are compositionally biased toward basic and acidic residues: residues 261-286 (TQTQ…EMKR) and 295-307 (EENR…QLSE). The tract at residues 261 to 307 (TQTQEEVRDSKENTEKNEQINEEMKRSGQLGLPDEENRRESKDQLSE) is disordered. Residues Ser-434, Ser-532, Ser-555, and Ser-556 each carry the phosphoserine modification.

This sequence belongs to the chromogranin/secretogranin protein family. As to quaternary structure, interacts with Secretogranin III/SCG3.

The protein localises to the secreted. Its function is as follows. Neuroendocrine protein of the granin family that regulates the biogenesis of secretory granules. The polypeptide is Secretogranin-2 (Scg2) (Mus musculus (Mouse)).